The following is a 218-amino-acid chain: Large ribosomal subunit protein uL3 (218 aa).

The tract at residues 133–158 (RGQGASHGAQAVHRRPGSIGGCATPG) is disordered.

The protein belongs to the universal ribosomal protein uL3 family. Part of the 50S ribosomal subunit. Forms a cluster with proteins L14 and L19.

One of the primary rRNA binding proteins, it binds directly near the 3'-end of the 23S rRNA, where it nucleates assembly of the 50S subunit. In Mycolicibacterium vanbaalenii (strain DSM 7251 / JCM 13017 / BCRC 16820 / KCTC 9966 / NRRL B-24157 / PYR-1) (Mycobacterium vanbaalenii), this protein is Large ribosomal subunit protein uL3.